The following is a 135-amino-acid chain: Galectin-1 (135 aa).

N-acetylalanine is present on Ala2. In terms of domain architecture, Galectin spans 4-135; it reads GLVASNLNLK…DFKIKCVAFD (132 aa). An N6-acetyllysine mark is found at Lys13 and Lys29. Phosphoserine is present on Ser30. A beta-D-galactoside contacts are provided by residues 45 to 49, His53, Asn62, and 69 to 72; these read HFNPR and WGAE. Lys108 carries the post-translational modification N6-acetyllysine; alternate. The residue at position 108 (Lys108) is an N6-succinyllysine; alternate. Lys128 carries the post-translational modification N6-acetyllysine.

In terms of assembly, homodimer. Binds LGALS3BP. Interacts with CD2, CD3, CD4, CD6, CD7, CD43, ALCAM and CD45. Interacts with laminin (via poly-N-acetyllactosamine). Interacts with SUSD2. Interacts with cargo receptor TMED10; the interaction mediates the translocation from the cytoplasm into the ERGIC (endoplasmic reticulum-Golgi intermediate compartment) and thereby secretion. The N-terminus is blocked.

It is found in the secreted. Its subcellular location is the extracellular space. It localises to the extracellular matrix. The protein localises to the cytoplasm. Lectin that binds beta-galactoside and a wide array of complex carbohydrates. Plays a role in regulating apoptosis, cell proliferation and cell differentiation. Inhibits CD45 protein phosphatase activity and therefore the dephosphorylation of Lyn kinase. Strong inducer of T-cell apoptosis. This Bubalus bubalis (Domestic water buffalo) protein is Galectin-1.